Reading from the N-terminus, the 739-residue chain is Phosphoribosylformylglycinamidine synthase subunit PurL (739 aa).

His-53 is an active-site residue. Tyr-56 and Lys-95 together coordinate ATP. Residue Glu-97 coordinates Mg(2+). Substrate contacts are provided by residues 98-101 and Arg-120; that span reads SHNH. The active-site Proton acceptor is His-99. Asp-121 contributes to the Mg(2+) binding site. Residue Gln-244 participates in substrate binding. Asp-274 serves as a coordination point for Mg(2+). Residue 318–320 coordinates substrate; sequence ESQ. ATP is bound by residues Asp-501 and Gly-538. Asn-539 contributes to the Mg(2+) binding site. Ser-541 is a binding site for substrate.

This sequence belongs to the FGAMS family. In terms of assembly, monomer. Part of the FGAM synthase complex composed of 1 PurL, 1 PurQ and 2 PurS subunits.

The protein localises to the cytoplasm. The catalysed reaction is N(2)-formyl-N(1)-(5-phospho-beta-D-ribosyl)glycinamide + L-glutamine + ATP + H2O = 2-formamido-N(1)-(5-O-phospho-beta-D-ribosyl)acetamidine + L-glutamate + ADP + phosphate + H(+). It participates in purine metabolism; IMP biosynthesis via de novo pathway; 5-amino-1-(5-phospho-D-ribosyl)imidazole from N(2)-formyl-N(1)-(5-phospho-D-ribosyl)glycinamide: step 1/2. Its function is as follows. Part of the phosphoribosylformylglycinamidine synthase complex involved in the purines biosynthetic pathway. Catalyzes the ATP-dependent conversion of formylglycinamide ribonucleotide (FGAR) and glutamine to yield formylglycinamidine ribonucleotide (FGAM) and glutamate. The FGAM synthase complex is composed of three subunits. PurQ produces an ammonia molecule by converting glutamine to glutamate. PurL transfers the ammonia molecule to FGAR to form FGAM in an ATP-dependent manner. PurS interacts with PurQ and PurL and is thought to assist in the transfer of the ammonia molecule from PurQ to PurL. This is Phosphoribosylformylglycinamidine synthase subunit PurL from Listeria monocytogenes serotype 4b (strain F2365).